The following is a 1129-amino-acid chain: Stress response protein nst1 (1129 aa).

5 disordered regions span residues 1 to 136 (MAPS…HLGT), 229 to 307 (NQGS…ETRA), 361 to 413 (NIAA…EQRM), 453 to 879 (MEEQ…TQRD), and 903 to 937 (NLSQ…PLAS). A compositionally biased stretch (polar residues) spans 14–54 (ATTSDQMSTASSRPTNGTAHTSAETAYPSSMTDSKPTQSGP). Residues 72–85 (SEQHMDHSNPDGHP) show a composition bias toward basic and acidic residues. Positions 89 to 101 (SGRKKKKKAKKGR) are enriched in basic residues. Composition is skewed to polar residues over residues 103 to 122 (GSQT…SVSM) and 254 to 263 (GQHTRTQGQF). Composition is skewed to acidic residues over residues 274-304 (TEDE…EDEE) and 379-408 (DEED…DTMT). Residues 441 to 608 (AEQRQQKLIE…EDQKKANQET (168 aa)) are a coiled coil. Basic and acidic residues-rich tracts occupy residues 453 to 473 (MEEQ…AEKR) and 482 to 613 (QAKE…ETKR). The segment covering 626 to 673 (LQPQGSSSHLQSPHLQSASPAVPKAPTPAKARQPSQQGSHGSSPRSQQ) has biased composition (low complexity). The segment covering 674 to 685 (ASTEPFHTSISP) has biased composition (polar residues). The span at 687 to 701 (SMAPSQSSGASSVAS) shows a compositional bias: low complexity. The span at 718 to 728 (TPLSPLGSVNR) shows a compositional bias: polar residues. A compositionally biased stretch (pro residues) spans 741-754 (SNPPGLPGMVPRPP). The segment covering 865–875 (TQQEQSDANRA) has biased composition (polar residues).

This sequence belongs to the NST1 family.

The protein localises to the cytoplasm. Functionally, may act as a negative regulator of salt tolerance. In Aspergillus terreus (strain NIH 2624 / FGSC A1156), this protein is Stress response protein nst1 (nst1).